A 417-amino-acid polypeptide reads, in one-letter code: MTLPSVSSAPSADGVWHNCHLLPDADPAHAIRDAALVVEHGRIAWLGATADLPDAYRGAARHDAHGAWITPGLVDCHTHLVYGGQRADEFAMRLAGAGYEEIARAGGGIVSTVRATRAADEDTLFAQAAARLQPLLAEGVTAIEIKSGYGLSLEAERKQLRVARRLGEHFGISVYTTFLGAHALPPEYAGRADDYIDLVCNTMLPALAGEGLVDAVDAFCESIGFSIAQTGRVFEAAARHGVRVKLHAEQLSNLGGAALAARHRALSADHLEHLDEAGVAAMAEAGTVAVLLPGAYYFLRDTNLPPIALLRQYGVPMAISTDHNPGTSPVTSLLLMMNMACTLFRLTVPEALAGVTVHAARALGASDRHGRLEAGRVADFALWRIDSPAELAYWFGRNPVATVVRQGRVHAHEGASA.

Fe(3+) is bound by residues His-77 and His-79. Residues His-77 and His-79 each contribute to the Zn(2+) site. Residues Arg-86, Tyr-149, and His-182 each contribute to the 4-imidazolone-5-propanoate site. Tyr-149 is an N-formimidoyl-L-glutamate binding site. Residue His-247 participates in Fe(3+) binding. Position 247 (His-247) interacts with Zn(2+). Gln-250 is a binding site for 4-imidazolone-5-propanoate. Asp-322 contributes to the Fe(3+) binding site. Zn(2+) is bound at residue Asp-322. 2 residues coordinate N-formimidoyl-L-glutamate: Asn-324 and Gly-326. 4-imidazolone-5-propanoate is bound at residue Thr-327.

This sequence belongs to the metallo-dependent hydrolases superfamily. HutI family. The cofactor is Zn(2+). Fe(3+) serves as cofactor.

Its subcellular location is the cytoplasm. It catalyses the reaction 4-imidazolone-5-propanoate + H2O = N-formimidoyl-L-glutamate. It participates in amino-acid degradation; L-histidine degradation into L-glutamate; N-formimidoyl-L-glutamate from L-histidine: step 3/3. In terms of biological role, catalyzes the hydrolytic cleavage of the carbon-nitrogen bond in imidazolone-5-propanoate to yield N-formimidoyl-L-glutamate. It is the third step in the universal histidine degradation pathway. The polypeptide is Imidazolonepropionase (Cupriavidus necator (strain ATCC 17699 / DSM 428 / KCTC 22496 / NCIMB 10442 / H16 / Stanier 337) (Ralstonia eutropha)).